Here is a 105-residue protein sequence, read N- to C-terminus: Malonate decarboxylase acyl carrier protein (105 aa).

At Ser28 the chain carries O-(phosphoribosyl dephospho-coenzyme A)serine.

Belongs to the MdcC family. In terms of processing, covalently binds the prosthetic group of malonate decarboxylase.

The protein localises to the cytoplasm. Functionally, subunit of malonate decarboxylase, it is an acyl carrier protein to which acetyl and malonyl thioester residues are bound via a 2'-(5''-phosphoribosyl)-3'-dephospho-CoA prosthetic group and turn over during the catalytic mechanism. The sequence is that of Malonate decarboxylase acyl carrier protein from Xanthomonas axonopodis pv. citri (strain 306).